The following is a 208-amino-acid chain: Large ribosomal subunit protein uL3 (208 aa).

Gln149 bears the N5-methylglutamine mark.

The protein belongs to the universal ribosomal protein uL3 family. Part of the 50S ribosomal subunit. Forms a cluster with proteins L14 and L19. In terms of processing, methylated by PrmB.

In terms of biological role, one of the primary rRNA binding proteins, it binds directly near the 3'-end of the 23S rRNA, where it nucleates assembly of the 50S subunit. The sequence is that of Large ribosomal subunit protein uL3 from Actinobacillus pleuropneumoniae serotype 5b (strain L20).